The chain runs to 368 residues: Phospho-N-acetylmuramoyl-pentapeptide-transferase (368 aa).

9 helical membrane-spanning segments follow: residues 30–50, 72–92, 98–118, 139–159, 170–190, 208–228, 238–258, 264–286, and 345–365; these read AAAI…IRYL, LPTM…LLWS, HVWL…IDDY, VALG…SVLM, LTID…TALS, AIVV…VYAT, GGEI…FLWF, EIFM…ALLI, and KIVI…LMTL.

The protein belongs to the glycosyltransferase 4 family. MraY subfamily. The cofactor is Mg(2+).

It is found in the cell inner membrane. The enzyme catalyses UDP-N-acetyl-alpha-D-muramoyl-L-alanyl-gamma-D-glutamyl-meso-2,6-diaminopimeloyl-D-alanyl-D-alanine + di-trans,octa-cis-undecaprenyl phosphate = di-trans,octa-cis-undecaprenyl diphospho-N-acetyl-alpha-D-muramoyl-L-alanyl-D-glutamyl-meso-2,6-diaminopimeloyl-D-alanyl-D-alanine + UMP. It functions in the pathway cell wall biogenesis; peptidoglycan biosynthesis. Catalyzes the initial step of the lipid cycle reactions in the biosynthesis of the cell wall peptidoglycan: transfers peptidoglycan precursor phospho-MurNAc-pentapeptide from UDP-MurNAc-pentapeptide onto the lipid carrier undecaprenyl phosphate, yielding undecaprenyl-pyrophosphoryl-MurNAc-pentapeptide, known as lipid I. The protein is Phospho-N-acetylmuramoyl-pentapeptide-transferase of Chlorobium luteolum (strain DSM 273 / BCRC 81028 / 2530) (Pelodictyon luteolum).